The primary structure comprises 205 residues: Ribonuclease HII (205 aa).

The RNase H type-2 domain occupies 15 to 205 (SQVCGIDEAG…SFKLRKLGEK (191 aa)). Asp21, Glu22, and Asp117 together coordinate a divalent metal cation.

The protein belongs to the RNase HII family. The cofactor is Mn(2+). It depends on Mg(2+) as a cofactor.

The protein resides in the cytoplasm. It catalyses the reaction Endonucleolytic cleavage to 5'-phosphomonoester.. Its function is as follows. Endonuclease that specifically degrades the RNA of RNA-DNA hybrids. This is Ribonuclease HII from Chlorobaculum tepidum (strain ATCC 49652 / DSM 12025 / NBRC 103806 / TLS) (Chlorobium tepidum).